The chain runs to 308 residues: Ribosomal RNA small subunit methyltransferase A (308 aa).

Asparagine 35, valine 37, glycine 62, glutamate 83, aspartate 113, and asparagine 136 together coordinate S-adenosyl-L-methionine.

This sequence belongs to the class I-like SAM-binding methyltransferase superfamily. rRNA adenine N(6)-methyltransferase family. RsmA subfamily.

The protein resides in the cytoplasm. It catalyses the reaction adenosine(1518)/adenosine(1519) in 16S rRNA + 4 S-adenosyl-L-methionine = N(6)-dimethyladenosine(1518)/N(6)-dimethyladenosine(1519) in 16S rRNA + 4 S-adenosyl-L-homocysteine + 4 H(+). Specifically dimethylates two adjacent adenosines (A1518 and A1519) in the loop of a conserved hairpin near the 3'-end of 16S rRNA in the 30S particle. May play a critical role in biogenesis of 30S subunits. This chain is Ribosomal RNA small subunit methyltransferase A, found in Bifidobacterium longum (strain NCC 2705).